The primary structure comprises 842 residues: Glycogen phosphorylase, muscle form (842 aa).

Position 2 is an N-acetylserine (Ser-2). Ser-15 bears the Phosphoserine; by PHK; in form phosphorylase A mark. AMP-binding residues include Asp-43 and Tyr-76. Phosphotyrosine is present on residues Tyr-204 and Tyr-227. Residue 310–319 (RRFKSSKFGS) participates in AMP binding. Ser-430 is subject to Phosphoserine. Tyr-473 carries the phosphotyrosine modification. Ser-514 carries the phosphoserine modification. At Lys-681 the chain carries N6-(pyridoxal phosphate)lysine. 2 positions are modified to phosphoserine: Ser-747 and Ser-748.

It belongs to the glycogen phosphorylase family. In terms of assembly, homodimer. Homotetramer; to form the enzymatically active phosphorylase A. Requires pyridoxal 5'-phosphate as cofactor. Phosphorylation of Ser-15 converts phosphorylase B (unphosphorylated) to phosphorylase A.

The catalysed reaction is [(1-&gt;4)-alpha-D-glucosyl](n) + phosphate = [(1-&gt;4)-alpha-D-glucosyl](n-1) + alpha-D-glucose 1-phosphate. With respect to regulation, allosterically regulated through the non-covalent binding of metabolites, being activated by AMP and inhibited by ATP, ADP, and glucose-6-phosphate. The activity is also controlled by post-translational modifications including phosphorylation. Allosteric enzyme that catalyzes the rate-limiting step in glycogen catabolism, the phosphorolytic cleavage of glycogen to produce glucose-1-phosphate, and plays a central role in maintaining cellular and organismal glucose homeostasis. This Mus musculus (Mouse) protein is Glycogen phosphorylase, muscle form.